We begin with the raw amino-acid sequence, 220 residues long: Ribonuclease HII (220 aa).

An RNase H type-2 domain is found at 32–220 (KHIAGIDEAG…FAPIKGRFDC (189 aa)). 3 residues coordinate a divalent metal cation: D38, E39, and D130.

This sequence belongs to the RNase HII family. It depends on Mn(2+) as a cofactor. Mg(2+) is required as a cofactor.

The protein resides in the cytoplasm. It catalyses the reaction Endonucleolytic cleavage to 5'-phosphomonoester.. Functionally, endonuclease that specifically degrades the RNA of RNA-DNA hybrids. The protein is Ribonuclease HII of Brucella canis (strain ATCC 23365 / NCTC 10854 / RM-666).